The following is a 146-amino-acid chain: Small ribosomal subunit protein uS5 (146 aa).

One can recognise an S5 DRBM domain in the interval 8 to 71 (FQEAIVKIGR…DDAFKSLVTV (64 aa)).

It belongs to the universal ribosomal protein uS5 family. Part of the 30S ribosomal subunit. Contacts proteins S4 and S8.

Functionally, with S4 and S12 plays an important role in translational accuracy. Located at the back of the 30S subunit body where it stabilizes the conformation of the head with respect to the body. This Aliarcobacter butzleri (strain RM4018) (Arcobacter butzleri) protein is Small ribosomal subunit protein uS5.